Reading from the N-terminus, the 290-residue chain is Cbb3-type cytochrome c oxidase subunit FixP (290 aa).

At 1-32 the chain is on the cytoplasmic side; sequence MTDHSEFDSVSGKTTTGHEWDGIKELNTPLPR. A helical membrane pass occupies residues 33–53; that stretch reads WWVICFYLTIVWAIGYWIVYP. The Periplasmic segment spans residues 54–290; the sequence is AWPLISSNTT…VYVHSLGGGK (237 aa). Cytochrome c domains are found at residues 109–198 and 206–287; these read LARA…RSLS and YDAA…HSLG. Positions 122, 125, 126, 173, 219, 222, 223, and 264 each coordinate heme c.

The protein belongs to the CcoP / FixP family. In terms of assembly, component of the cbb3-type cytochrome c oxidase at least composed of FixN, FixO, FixQ and FixP. The cofactor is heme c.

It localises to the cell inner membrane. It functions in the pathway energy metabolism; oxidative phosphorylation. In terms of biological role, C-type cytochrome. Part of the cbb3-type cytochrome c oxidase complex. FixP subunit is required for transferring electrons from donor cytochrome c via its heme groups to FixO subunit. From there, electrons are shuttled to the catalytic binuclear center of FixN subunit where oxygen reduction takes place. The complex also functions as a proton pump. This is Cbb3-type cytochrome c oxidase subunit FixP from Bradyrhizobium diazoefficiens (strain JCM 10833 / BCRC 13528 / IAM 13628 / NBRC 14792 / USDA 110).